The following is a 466-amino-acid chain: Soluble pyridine nucleotide transhydrogenase (466 aa).

FAD is bound at residue 36–45 (ERYQNVGGGC).

The protein belongs to the class-I pyridine nucleotide-disulfide oxidoreductase family. FAD serves as cofactor.

The protein resides in the cytoplasm. The catalysed reaction is NAD(+) + NADPH = NADH + NADP(+). Functionally, conversion of NADPH, generated by peripheral catabolic pathways, to NADH, which can enter the respiratory chain for energy generation. The chain is Soluble pyridine nucleotide transhydrogenase from Escherichia coli O9:H4 (strain HS).